A 476-amino-acid chain; its full sequence is Membrane-bound lytic murein transglycosylase F (476 aa).

The signal sequence occupies residues 1-15; that stretch reads MRSFLLILFCVSLLT. The tract at residues 16-258 is non-LT domain; that stretch reads GCQGERVDAA…HLNEKYFAHV (243 aa). An LT domain region spans residues 259-476; sequence KRFDYVDTRA…QSEISAAQPN (218 aa). Residue glutamate 303 is part of the active site. The tract at residues 456 to 476 is disordered; sequence EAQQQTAEKQSQSEISAAQPN.

This sequence in the N-terminal section; belongs to the bacterial solute-binding protein 3 family. The protein in the C-terminal section; belongs to the transglycosylase Slt family.

It is found in the cell outer membrane. The catalysed reaction is Exolytic cleavage of the (1-&gt;4)-beta-glycosidic linkage between N-acetylmuramic acid (MurNAc) and N-acetylglucosamine (GlcNAc) residues in peptidoglycan, from either the reducing or the non-reducing ends of the peptidoglycan chains, with concomitant formation of a 1,6-anhydrobond in the MurNAc residue.. Its function is as follows. Murein-degrading enzyme that degrades murein glycan strands and insoluble, high-molecular weight murein sacculi, with the concomitant formation of a 1,6-anhydromuramoyl product. Lytic transglycosylases (LTs) play an integral role in the metabolism of the peptidoglycan (PG) sacculus. Their lytic action creates space within the PG sacculus to allow for its expansion as well as for the insertion of various structures such as secretion systems and flagella. This chain is Membrane-bound lytic murein transglycosylase F, found in Shewanella loihica (strain ATCC BAA-1088 / PV-4).